Consider the following 302-residue polypeptide: Quinolinate synthase (302 aa).

Iminosuccinate is bound by residues His-24 and Ser-41. Cys-86 is a [4Fe-4S] cluster binding site. Residues 112–114 and Ser-129 each bind iminosuccinate; that span reads YVN. Cys-171 is a binding site for [4Fe-4S] cluster. Iminosuccinate is bound by residues 197–199 and Thr-214; that span reads HPE. [4Fe-4S] cluster is bound at residue Cys-259.

Belongs to the quinolinate synthase family. Type 2 subfamily. Requires [4Fe-4S] cluster as cofactor.

It is found in the cytoplasm. The catalysed reaction is iminosuccinate + dihydroxyacetone phosphate = quinolinate + phosphate + 2 H2O + H(+). Its pathway is cofactor biosynthesis; NAD(+) biosynthesis; quinolinate from iminoaspartate: step 1/1. Functionally, catalyzes the condensation of iminoaspartate with dihydroxyacetone phosphate to form quinolinate. This chain is Quinolinate synthase, found in Dehalococcoides mccartyi (strain ATCC BAA-2100 / JCM 16839 / KCTC 5957 / BAV1).